The chain runs to 153 residues: D-amino acid oxidase regulator (153 aa).

The involved in targeting to the mitochondrion stretch occupies residues 1-25; that stretch reads MLEKLMGADSLQLFRSRYTLGKIYF. Positions 138 to 153 are interaction with DAO; the sequence is KDQSCNHKEITSTKAE.

Interacts with DAO (D-amino acid oxidase); the interaction is direct, can occur in the presence or absence of FAD or substrate bound to DAO, and results in a complex containing two DAO homodimers and two DAOA monomers. Interacts with DDO (D-aspartate oxidase); the interaction is direct. Interacts wih SOD1; the interaction is direct. Interacts with MSRB2; the interaction is direct. As to expression, expressed in the amygdala and in astrocytes of the cortex (at protein level). Expressed in the caudate nucleus, spinal cord and testis.

The protein localises to the cytoplasm. Its subcellular location is the cytosol. It localises to the golgi apparatus. It is found in the mitochondrion. Functionally, may suppress DAO (D-amino acid oxidase) and SOD1 activity and promote their degradation. Has conversely also been suggested to function as a DAO activator. May stimulate the degradation of DDO (D-aspartate oxidase). May play a role in mitochondrial fission. The chain is D-amino acid oxidase regulator (DAOA) from Homo sapiens (Human).